Consider the following 205-residue polypeptide: Putative 3-methyladenine DNA glycosylase (205 aa).

Belongs to the DNA glycosylase MPG family.

In Bacillus cereus (strain ZK / E33L), this protein is Putative 3-methyladenine DNA glycosylase.